The sequence spans 151 residues: S-ribosylhomocysteine lyase (151 aa).

The Fe cation site is built by His54, His58, and Cys121.

It belongs to the LuxS family. Homodimer. The cofactor is Fe cation.

The enzyme catalyses S-(5-deoxy-D-ribos-5-yl)-L-homocysteine = (S)-4,5-dihydroxypentane-2,3-dione + L-homocysteine. In terms of biological role, involved in the synthesis of autoinducer 2 (AI-2) which is secreted by bacteria and is used to communicate both the cell density and the metabolic potential of the environment. The regulation of gene expression in response to changes in cell density is called quorum sensing. Catalyzes the transformation of S-ribosylhomocysteine (RHC) to homocysteine (HC) and 4,5-dihydroxy-2,3-pentadione (DPD). This Clostridium botulinum (strain Alaska E43 / Type E3) protein is S-ribosylhomocysteine lyase.